Consider the following 255-residue polypeptide: Hydroxyacylglutathione hydrolase (255 aa).

Zn(2+) is bound by residues His-56, His-58, Asp-60, His-61, His-114, Asp-133, and His-171.

It belongs to the metallo-beta-lactamase superfamily. Glyoxalase II family. Monomer. Requires Zn(2+) as cofactor.

It carries out the reaction an S-(2-hydroxyacyl)glutathione + H2O = a 2-hydroxy carboxylate + glutathione + H(+). It functions in the pathway secondary metabolite metabolism; methylglyoxal degradation; (R)-lactate from methylglyoxal: step 2/2. Functionally, thiolesterase that catalyzes the hydrolysis of S-D-lactoyl-glutathione to form glutathione and D-lactic acid. This is Hydroxyacylglutathione hydrolase from Bradyrhizobium sp. (strain BTAi1 / ATCC BAA-1182).